The sequence spans 173 residues: Putative metal-dependent hydrolase BT9727_2476 (173 aa).

Residues histidine 65, histidine 156, and histidine 160 each contribute to the Zn(2+) site.

The protein belongs to the metal hydrolase YfiT family. Homodimer. The cofactor is Zn(2+).

The protein resides in the cytoplasm. Its function is as follows. Possible metal-dependent hydrolase. The polypeptide is Putative metal-dependent hydrolase BT9727_2476 (Bacillus thuringiensis subsp. konkukian (strain 97-27)).